Consider the following 170-residue polypeptide: Orotate phosphoribosyltransferase (170 aa).

5-phospho-alpha-D-ribose 1-diphosphate is bound by residues Arg-86, Lys-87, Lys-90, His-92, and 111–119 (EDVTTSGGS). Positions 115 and 143 each coordinate orotate.

This sequence belongs to the purine/pyrimidine phosphoribosyltransferase family. PyrE subfamily. In terms of assembly, homodimer. The cofactor is Mg(2+).

It carries out the reaction orotidine 5'-phosphate + diphosphate = orotate + 5-phospho-alpha-D-ribose 1-diphosphate. The protein operates within pyrimidine metabolism; UMP biosynthesis via de novo pathway; UMP from orotate: step 1/2. Functionally, catalyzes the transfer of a ribosyl phosphate group from 5-phosphoribose 1-diphosphate to orotate, leading to the formation of orotidine monophosphate (OMP). The polypeptide is Orotate phosphoribosyltransferase (Methanoculleus marisnigri (strain ATCC 35101 / DSM 1498 / JR1)).